The primary structure comprises 787 residues: Endonuclease MutS2 (787 aa).

Position 335 to 342 (335 to 342) interacts with ATP; the sequence is GPNTGGKT. The 76-residue stretch at 712–787 folds into the Smr domain; that stretch reads LDLRGERYED…GLGNTVIELK (76 aa).

It belongs to the DNA mismatch repair MutS family. MutS2 subfamily. In terms of assembly, homodimer. Binds to stalled ribosomes, contacting rRNA.

Endonuclease that is involved in the suppression of homologous recombination and thus may have a key role in the control of bacterial genetic diversity. Functionally, acts as a ribosome collision sensor, splitting the ribosome into its 2 subunits. Detects stalled/collided 70S ribosomes which it binds and splits by an ATP-hydrolysis driven conformational change. Acts upstream of the ribosome quality control system (RQC), a ribosome-associated complex that mediates the extraction of incompletely synthesized nascent chains from stalled ribosomes and their subsequent degradation. Probably generates substrates for RQC. The chain is Endonuclease MutS2 from Shouchella clausii (strain KSM-K16) (Alkalihalobacillus clausii).